A 683-amino-acid polypeptide reads, in one-letter code: Sorting nexin MVP1 (683 aa).

Disordered stretches follow at residues 1-25 (MSRH…PTSP) and 246-276 (LLAH…TRQE). The span at 248–257 (AHNQGSSTDT) shows a compositional bias: polar residues. Positions 302–418 (PEDQVTVRLR…EVFFTEPRPI (117 aa)) constitute a PX domain. A 1,2-diacyl-sn-glycero-3-phospho-(1D-myo-inositol-3-phosphate)-binding residues include Arg-338, Ser-340, Lys-364, and Arg-385.

This sequence belongs to the sorting nexin family.

The protein resides in the cytoplasm. It localises to the membrane. Required for vacuolar protein sorting. The chain is Sorting nexin MVP1 (MVP1) from Mycosarcoma maydis (Corn smut fungus).